The chain runs to 427 residues: Glutamate-1-semialdehyde 2,1-aminomutase (427 aa).

Lys-265 is subject to N6-(pyridoxal phosphate)lysine.

The protein belongs to the class-III pyridoxal-phosphate-dependent aminotransferase family. HemL subfamily. Homodimer. Requires pyridoxal 5'-phosphate as cofactor.

The protein resides in the cytoplasm. It catalyses the reaction (S)-4-amino-5-oxopentanoate = 5-aminolevulinate. Its pathway is porphyrin-containing compound metabolism; protoporphyrin-IX biosynthesis; 5-aminolevulinate from L-glutamyl-tRNA(Glu): step 2/2. This is Glutamate-1-semialdehyde 2,1-aminomutase from Marinomonas sp. (strain MWYL1).